A 556-amino-acid polypeptide reads, in one-letter code: Delta-1-pyrroline-5-carboxylate dehydrogenase 12A1, mitochondrial (556 aa).

282-287 (GSSRVA) serves as a coordination point for NAD(+). E301 functions as the Proton acceptor in the catalytic mechanism. C336 acts as the Nucleophile in catalysis.

It belongs to the aldehyde dehydrogenase family. In terms of tissue distribution, highly expressed in flowers. Constitutively expressed at low levels in the other tissues. Highly expressed in pollen grains and tissues undergoing cell death. Expressed in old leaves, mature siliques and developing embryos.

It localises to the mitochondrion matrix. The enzyme catalyses (S)-1-pyrroline-5-carboxylate + NAD(+) + 2 H2O = L-glutamate + NADH + H(+). Its pathway is amino-acid degradation; L-proline degradation into L-glutamate; L-glutamate from L-proline: step 2/2. Plays a role in the inhibition of programmed cell death by converting the toxic proline catabolism intermediate (s)-1-pyrroline-5-carboxylate (P5C) to glutamate. In Arabidopsis thaliana (Mouse-ear cress), this protein is Delta-1-pyrroline-5-carboxylate dehydrogenase 12A1, mitochondrial.